The following is a 442-amino-acid chain: C4-dicarboxylate transport protein (442 aa).

8 helical membrane passes run 10–30, 40–60, 77–97, 149–169, 185–205, 221–241, 288–308, and 354–374; these read VQVL…PSFG, FIKL…VSGI, LIYF…VANI, LLQV…LGTL, FVIL…AMAF, LMVA…GLIA, VVGL…SIYL, and AATL…ILGI. Residues 420–442 are disordered; the sequence is PATPEVAAEERGEGRGLDGPLPA.

Belongs to the dicarboxylate/amino acid:cation symporter (DAACS) (TC 2.A.23) family.

It is found in the cell membrane. Its function is as follows. Responsible for the transport of dicarboxylates such as succinate, fumarate, and malate across the membrane. This chain is C4-dicarboxylate transport protein, found in Deinococcus geothermalis (strain DSM 11300 / CIP 105573 / AG-3a).